The chain runs to 307 residues: 4-hydroxy-3-methylbut-2-enyl diphosphate reductase (307 aa).

Cysteine 13 is a binding site for [4Fe-4S] cluster. Residues histidine 42 and histidine 75 each contribute to the (2E)-4-hydroxy-3-methylbut-2-enyl diphosphate site. 2 residues coordinate dimethylallyl diphosphate: histidine 42 and histidine 75. Residues histidine 42 and histidine 75 each contribute to the isopentenyl diphosphate site. [4Fe-4S] cluster is bound at residue cysteine 97. (2E)-4-hydroxy-3-methylbut-2-enyl diphosphate is bound at residue histidine 125. Histidine 125 contributes to the dimethylallyl diphosphate binding site. Histidine 125 contributes to the isopentenyl diphosphate binding site. The Proton donor role is filled by glutamate 127. A (2E)-4-hydroxy-3-methylbut-2-enyl diphosphate-binding site is contributed by threonine 165. Cysteine 195 lines the [4Fe-4S] cluster pocket. Residues serine 223, serine 224, asparagine 225, and serine 267 each coordinate (2E)-4-hydroxy-3-methylbut-2-enyl diphosphate. Dimethylallyl diphosphate contacts are provided by serine 223, serine 224, asparagine 225, and serine 267. Residues serine 223, serine 224, asparagine 225, and serine 267 each contribute to the isopentenyl diphosphate site.

This sequence belongs to the IspH family. [4Fe-4S] cluster serves as cofactor.

It catalyses the reaction isopentenyl diphosphate + 2 oxidized [2Fe-2S]-[ferredoxin] + H2O = (2E)-4-hydroxy-3-methylbut-2-enyl diphosphate + 2 reduced [2Fe-2S]-[ferredoxin] + 2 H(+). The catalysed reaction is dimethylallyl diphosphate + 2 oxidized [2Fe-2S]-[ferredoxin] + H2O = (2E)-4-hydroxy-3-methylbut-2-enyl diphosphate + 2 reduced [2Fe-2S]-[ferredoxin] + 2 H(+). It functions in the pathway isoprenoid biosynthesis; dimethylallyl diphosphate biosynthesis; dimethylallyl diphosphate from (2E)-4-hydroxy-3-methylbutenyl diphosphate: step 1/1. The protein operates within isoprenoid biosynthesis; isopentenyl diphosphate biosynthesis via DXP pathway; isopentenyl diphosphate from 1-deoxy-D-xylulose 5-phosphate: step 6/6. Catalyzes the conversion of 1-hydroxy-2-methyl-2-(E)-butenyl 4-diphosphate (HMBPP) into a mixture of isopentenyl diphosphate (IPP) and dimethylallyl diphosphate (DMAPP). Acts in the terminal step of the DOXP/MEP pathway for isoprenoid precursor biosynthesis. This chain is 4-hydroxy-3-methylbut-2-enyl diphosphate reductase, found in Chlamydia trachomatis serovar L2 (strain ATCC VR-902B / DSM 19102 / 434/Bu).